Here is an 828-residue protein sequence, read N- to C-terminus: Periplasmic nitrate reductase (828 aa).

The segment at residues 1–31 is a signal peptide (tat-type signal); that stretch reads MKLSRRSFMKANAVAAAAAAAGLSVPGVARA. The 57-residue stretch at 39 to 95 folds into the 4Fe-4S Mo/W bis-MGD-type domain; that stretch reads IKWDKAPCRFCGTGCGVLVGTQQGRVVACQGDPDAPVNRGLNCIKGYFLPKIMYGKD. Positions 46, 49, 53, and 81 each coordinate [4Fe-4S] cluster. Mo-bis(molybdopterin guanine dinucleotide)-binding positions include Lys-83, Gln-150, Asn-175, Cys-179, 212–219, 243–247, 262–264, Met-372, Gln-376, Asn-482, 508–509, Lys-531, Asp-558, and 718–727; these read WGSNMAEM, STFQH, QSD, SD, and TGRVLEHWHT. Phe-794 is a substrate binding site. Asn-802 and Lys-819 together coordinate Mo-bis(molybdopterin guanine dinucleotide).

It belongs to the prokaryotic molybdopterin-containing oxidoreductase family. NasA/NapA/NarB subfamily. As to quaternary structure, component of the periplasmic nitrate reductase NapAB complex composed of NapA and NapB. Requires [4Fe-4S] cluster as cofactor. Mo-bis(molybdopterin guanine dinucleotide) is required as a cofactor. Post-translationally, predicted to be exported by the Tat system. The position of the signal peptide cleavage has not been experimentally proven.

It localises to the periplasm. The enzyme catalyses 2 Fe(II)-[cytochrome] + nitrate + 2 H(+) = 2 Fe(III)-[cytochrome] + nitrite + H2O. Its function is as follows. Catalytic subunit of the periplasmic nitrate reductase complex NapAB. Receives electrons from NapB and catalyzes the reduction of nitrate to nitrite. This is Periplasmic nitrate reductase from Salmonella dublin (strain CT_02021853).